The primary structure comprises 215 residues: Protein-L-isoaspartate O-methyltransferase (215 aa).

Ser-62 is an active-site residue.

It belongs to the methyltransferase superfamily. L-isoaspartyl/D-aspartyl protein methyltransferase family.

It is found in the cytoplasm. It catalyses the reaction [protein]-L-isoaspartate + S-adenosyl-L-methionine = [protein]-L-isoaspartate alpha-methyl ester + S-adenosyl-L-homocysteine. Catalyzes the methyl esterification of L-isoaspartyl residues in peptides and proteins that result from spontaneous decomposition of normal L-aspartyl and L-asparaginyl residues. It plays a role in the repair and/or degradation of damaged proteins. This Nitratidesulfovibrio vulgaris (strain DSM 19637 / Miyazaki F) (Desulfovibrio vulgaris) protein is Protein-L-isoaspartate O-methyltransferase.